A 355-amino-acid chain; its full sequence is Phosphate acyltransferase (355 aa).

The protein belongs to the PlsX family. In terms of assembly, homodimer. Probably interacts with PlsY.

It is found in the cytoplasm. It catalyses the reaction a fatty acyl-[ACP] + phosphate = an acyl phosphate + holo-[ACP]. The protein operates within lipid metabolism; phospholipid metabolism. Catalyzes the reversible formation of acyl-phosphate (acyl-PO(4)) from acyl-[acyl-carrier-protein] (acyl-ACP). This enzyme utilizes acyl-ACP as fatty acyl donor, but not acyl-CoA. The protein is Phosphate acyltransferase of Azorhizobium caulinodans (strain ATCC 43989 / DSM 5975 / JCM 20966 / LMG 6465 / NBRC 14845 / NCIMB 13405 / ORS 571).